Here is a 270-residue protein sequence, read N- to C-terminus: 4-hydroxy-tetrahydrodipicolinate reductase (270 aa).

NAD(+) contacts are provided by residues 9–14 (GAGGRM) and E35. R36 lines the NADP(+) pocket. NAD(+) contacts are provided by residues 99–101 (GTT) and 123–126 (ASNF). Residue H156 is the Proton donor/acceptor of the active site. H157 is a (S)-2,3,4,5-tetrahydrodipicolinate binding site. The active-site Proton donor is K160. 166–167 (GT) serves as a coordination point for (S)-2,3,4,5-tetrahydrodipicolinate.

Belongs to the DapB family.

The protein resides in the cytoplasm. The catalysed reaction is (S)-2,3,4,5-tetrahydrodipicolinate + NAD(+) + H2O = (2S,4S)-4-hydroxy-2,3,4,5-tetrahydrodipicolinate + NADH + H(+). It catalyses the reaction (S)-2,3,4,5-tetrahydrodipicolinate + NADP(+) + H2O = (2S,4S)-4-hydroxy-2,3,4,5-tetrahydrodipicolinate + NADPH + H(+). It participates in amino-acid biosynthesis; L-lysine biosynthesis via DAP pathway; (S)-tetrahydrodipicolinate from L-aspartate: step 4/4. In terms of biological role, catalyzes the conversion of 4-hydroxy-tetrahydrodipicolinate (HTPA) to tetrahydrodipicolinate. In Pasteurella multocida (strain Pm70), this protein is 4-hydroxy-tetrahydrodipicolinate reductase.